A 575-amino-acid chain; its full sequence is Estrogen receptor beta (575 aa).

The segment at 1-160 is modulating; that stretch reads MSSSLSPTLQ…GAVVKRDMHF (160 aa). Positions 108-151 are disordered; that stretch reads DTKPHTSGRHSSFLSRPKLFGKRPEDGDGDEALDDDDPSSSSSG. Acidic residues predominate over residues 134 to 145; the sequence is GDGDEALDDDDP. 2 NR C4-type zinc fingers span residues 161–181 and 197–221; these read CVVCHDYASGYHYGVWSCEGC and CPATNQCTIDKNRRKSCQACRLRKC. The segment at residues 161 to 226 is a DNA-binding region (nuclear receptor); it reads CVVCHDYASG…RLRKCYEMGM (66 aa). An NR LBD domain is found at 290 to 526; sequence SPEQLVYCIL…DLLLEMLDAN (237 aa). Positions 537–549 are enriched in polar residues; that stretch reads VCTDPVTPATSPN. A disordered region spans residues 537–557; sequence VCTDPVTPATSPNTPLPPQLH.

It belongs to the nuclear hormone receptor family. NR3 subfamily. As to quaternary structure, binds DNA as a homodimer. Can form a heterodimer with ER-alpha. In terms of tissue distribution, ovary and testis.

The protein resides in the nucleus. Binds estrogens with an affinity similar to that of ER-alpha, and activates expression of reporter genes containing estrogen response elements (ERE) in an estrogen-dependent manner. The protein is Estrogen receptor beta (esr2) of Ictalurus punctatus (Channel catfish).